The sequence spans 40 residues: Large ribosomal subunit protein bL36 (40 aa).

Belongs to the bacterial ribosomal protein bL36 family.

In Corynebacterium jeikeium (strain K411), this protein is Large ribosomal subunit protein bL36.